The following is a 197-amino-acid chain: Guanylate kinase (197 aa).

A Guanylate kinase-like domain is found at 6–191 (SKLIILSGPS…CVAQIEKIIS (186 aa)). Position 13-20 (13-20 (GPSGVGKG)) interacts with ATP.

It belongs to the guanylate kinase family.

It localises to the cytoplasm. It carries out the reaction GMP + ATP = GDP + ADP. Essential for recycling GMP and indirectly, cGMP. The polypeptide is Guanylate kinase (Mesomycoplasma hyopneumoniae (strain 232) (Mycoplasma hyopneumoniae)).